The following is a 247-amino-acid chain: NAD(P)H-quinone oxidoreductase subunit K (247 aa).

[4Fe-4S] cluster contacts are provided by cysteine 63, cysteine 64, cysteine 128, and cysteine 159.

This sequence belongs to the complex I 20 kDa subunit family. NDH-1 can be composed of about 15 different subunits; different subcomplexes with different compositions have been identified which probably have different functions. Requires [4Fe-4S] cluster as cofactor.

It is found in the cellular thylakoid membrane. The enzyme catalyses a plastoquinone + NADH + (n+1) H(+)(in) = a plastoquinol + NAD(+) + n H(+)(out). It carries out the reaction a plastoquinone + NADPH + (n+1) H(+)(in) = a plastoquinol + NADP(+) + n H(+)(out). Its function is as follows. NDH-1 shuttles electrons from an unknown electron donor, via FMN and iron-sulfur (Fe-S) centers, to quinones in the respiratory and/or the photosynthetic chain. The immediate electron acceptor for the enzyme in this species is believed to be plastoquinone. Couples the redox reaction to proton translocation, and thus conserves the redox energy in a proton gradient. Cyanobacterial NDH-1 also plays a role in inorganic carbon-concentration. This Microcystis aeruginosa (strain NIES-843 / IAM M-2473) protein is NAD(P)H-quinone oxidoreductase subunit K.